A 441-amino-acid polypeptide reads, in one-letter code: Ribulose bisphosphate carboxylase/oxygenase activase, chloroplastic (441 aa).

Position 167–174 (167–174) interacts with ATP; the sequence is VWGGKGQG.

Belongs to the RuBisCO activase family.

The protein localises to the plastid. It localises to the chloroplast stroma. Functionally, activation of RuBisCO (ribulose-1,5-bisphosphate carboxylase/oxygenase; EC 4.1.1.39) involves the ATP-dependent carboxylation of the epsilon-amino group of lysine leading to a carbamate structure. The chain is Ribulose bisphosphate carboxylase/oxygenase activase, chloroplastic (RCA1) from Phaseolus vulgaris (Kidney bean).